Here is a 198-residue protein sequence, read N- to C-terminus: Na(+)-translocating NADH-quinone reductase subunit E (198 aa).

The next 6 helical transmembrane spans lie at 11–31, 39–59, 77–97, 110–130, 140–160, and 176–196; these read SIFI…FLAV, FGLG…NNLV, FLSF…LEMI, GIFL…SFMV, VVYG…LAGI, and LGIT…FSGV.

It belongs to the NqrDE/RnfAE family. As to quaternary structure, composed of six subunits; NqrA, NqrB, NqrC, NqrD, NqrE and NqrF.

Its subcellular location is the cell inner membrane. The catalysed reaction is a ubiquinone + n Na(+)(in) + NADH + H(+) = a ubiquinol + n Na(+)(out) + NAD(+). In terms of biological role, NQR complex catalyzes the reduction of ubiquinone-1 to ubiquinol by two successive reactions, coupled with the transport of Na(+) ions from the cytoplasm to the periplasm. NqrA to NqrE are probably involved in the second step, the conversion of ubisemiquinone to ubiquinol. The chain is Na(+)-translocating NADH-quinone reductase subunit E from Aliivibrio fischeri (strain ATCC 700601 / ES114) (Vibrio fischeri).